Consider the following 1335-residue polypeptide: Bifunctional autolysin (1335 aa).

The N-terminal stretch at 1-29 (MAKKFNYKLPSMVALTLFGTAFTAHQANA) is a signal peptide. Disordered stretches follow at residues 51-88 (QAEKAKSEVTQSTTNVSGTQTYQDPTQVQPKQDTQSTT), 100-262 (NEIS…KYKE), and 514-535 (WGTTSTKPSQPSKPSGGTNNKL). Composition is skewed to polar residues over residues 58–88 (EVTQSTTNVSGTQTYQDPTQVQPKQDTQSTT), 100–127 (NEISSNQKQQSLSTDDANQNQTNSVTKN), 143–155 (TDTNQLQETQSVA), 176–223 (TASQ…NASG), and 244–258 (SLNNVNATSKQTTSY). Positions 303–863 (VSSQKTSSLP…LSTQSTPAPK (561 aa)) are N-acetylmuramoyl-L-alanine amidase. Positions 515–531 (GTTSTKPSQPSKPSGGT) are enriched in low complexity. 7 consecutive GW domains span residues 533 to 610 (NKLT…YNTA), 612 to 686 (APVK…TASK), 700 to 774 (TVTN…YNTA), 776 to 850 (SPVK…APSK), 868 to 943 (STQT…TQNI), 945 to 1020 (KQTQ…QNST), and 1023 to 1096 (QSTP…KEKI). The segment at 864–1335 (QVKPSTQTVN…GKYFEIPIYK (472 aa)) is endo-beta-N-acetylglucosaminidase.

It in the N-terminal section; belongs to the N-acetylmuramoyl-L-alanine amidase 2 family. In the C-terminal section; belongs to the glycosyl hydrolase 73 family. In terms of assembly, oligomer; forms a ring structure at the cell surface which is important for efficient partitioning of daughter cells after cell division. Post-translationally, undergoes proteolytic processing to generate the two extracellular lytic enzymes, probably at the septal region on the cell surface.

It localises to the secreted. It carries out the reaction Hydrolyzes the link between N-acetylmuramoyl residues and L-amino acid residues in certain cell-wall glycopeptides.. It catalyses the reaction an N(4)-(oligosaccharide-(1-&gt;3)-[oligosaccharide-(1-&gt;6)]-beta-D-Man-(1-&gt;4)-beta-D-GlcNAc-(1-&gt;4)-alpha-D-GlcNAc)-L-asparaginyl-[protein] + H2O = an oligosaccharide-(1-&gt;3)-[oligosaccharide-(1-&gt;6)]-beta-D-Man-(1-&gt;4)-D-GlcNAc + N(4)-(N-acetyl-beta-D-glucosaminyl)-L-asparaginyl-[protein]. Endohydrolysis of the di-N-acetylchitobiosyl unit in high-mannose glycopeptides and glycoproteins containing the -[(Man)5(GlcNAc)2]-Asn structure. One N-acetyl-D-glucosamine residue remains attached to the protein; the rest of the oligosaccharide is released intact. Cleaves the peptidoglycan connecting the daughter cells at the end of the cell division cycle, resulting in the separation of the two newly divided cells. Acts as an autolysin in penicillin-induced lysis. This chain is Bifunctional autolysin (atl), found in Staphylococcus epidermidis (strain ATCC 12228 / FDA PCI 1200).